The primary structure comprises 146 residues: Angiogenin (146 aa).

Residues 1–24 (MVMGLGLFLLVFMLGLGLTPPTLA) form the signal peptide. Residue Gln-25 is modified to Pyrrolidone carboxylic acid. The active-site Proton acceptor is the His-37. TRNA is bound at residue Arg-45. 3 cysteine pairs are disulfide-bonded: Cys-50/Cys-105, Cys-63/Cys-116, and Cys-81/Cys-131. The Nucleolar localization signal motif lies at 55-59 (RRRGL). 2 residues coordinate tRNA: Cys-105 and Ile-127. His-138 functions as the Proton donor in the catalytic mechanism.

The protein belongs to the pancreatic ribonuclease family. In terms of assembly, homodimer. Interacts with RNH1; inhibiting ANG ribonuclease activity. Interacts with PCNA.

Its subcellular location is the secreted. It is found in the nucleus. It localises to the nucleolus. The protein localises to the cytoplasm. The protein resides in the stress granule. With respect to regulation, has weak tRNA ribonuclease activity by itself due to partial autoinhibition by its C-terminus, which folds into a short alpha-helix that partially occludes the substrate-binding site. In absence of stress, the ribonuclease activity is inhibited by RNH1 in the cytoplasm. In response to stress, dissociates from RNH1 in the cytoplasm and associates with cytoplasmic ribosomes with vacant A-sites: ribosomes directly activate the tRNA ribonuclease activity of ANG by refolding the C-terminal alpha-helix. In response to stress, the angiogenic activity of ANG is inhibited by RNH1 in the nucleus. In terms of biological role, secreted ribonuclease that can either promote or restrict cell proliferation of target cells, depending on the context. Endocytosed in target cells via its receptor PLXNB2 and translocates to the cytoplasm or nucleus. Under stress conditions, localizes to the cytoplasm and promotes the assembly of stress granules (SGs): specifically cleaves a subset of tRNAs within anticodon loops to produce tRNA-derived stress-induced fragments (tiRNAs), resulting in translation repression and inhibition of cell proliferation. tiRNas also prevent formation of apoptosome, thereby promoting cell survival. Preferentially cleaves RNAs between a pyrimidine and an adenosine residue, suggesting that it cleaves the anticodon loop of tRNA(Ala) (32-UUAGCAU-38) after positions 33 and 36. Cleaves a subset of tRNAs, including tRNA(Ala), tRNA(Glu), tRNA(Gly), tRNA(Lys), tRNA(Val), tRNA(His), tRNA(Asp) and tRNA(Sec). Under growth conditions and in differentiated cells, translocates to the nucleus and stimulates ribosomal RNA (rRNA) transcription, including that containing the initiation site sequences of 45S rRNA, thereby promoting cell growth and proliferation. Angiogenin induces vascularization of normal and malignant tissues via its ability to promote rRNA transcription. Involved in hematopoietic stem and progenitor cell (HSPC) growth and survival by promoting rRNA transcription in growth conditions and inhibiting translation in response to stress, respectively. Mediates the crosstalk between myeloid and intestinal epithelial cells to protect the intestinal epithelial barrier integrity: secreted by myeloid cells and promotes intestinal epithelial cells proliferation and survival. Also mediates osteoclast-endothelial cell crosstalk in growing bone: produced by osteoclasts and protects the neighboring vascular cells against senescence by promoting rRNA transcription. This Trachypithecus francoisi (Francois' leaf monkey) protein is Angiogenin (ANG).